Reading from the N-terminus, the 153-residue chain is 17.3 kDa class I heat shock protein (153 aa).

The sHSP domain maps to 39 to 153 (ENSAFVSTRV…PDVKAIDISG (115 aa)).

Belongs to the small heat shock protein (HSP20) family. As to quaternary structure, forms oligomeric structures.

It is found in the cytoplasm. This chain is 17.3 kDa class I heat shock protein (HSP17.3-B), found in Glycine max (Soybean).